Consider the following 227-residue polypeptide: Monoamine regulon transcriptional regulator (227 aa).

In terms of domain architecture, HTH luxR-type spans 155 to 220 (EDDLPAILTA…ELVSRTWMPA (66 aa)). The H-T-H motif DNA-binding region spans 179 to 198 (NKLIARQLDISLSTVKTHLR).

Positive regulatory protein for the induction of arylsulfatase synthesis (maoA), tyramine oxidase (tynA), maoC, maoE/F operon, and atsB/A operon which are all regulated by monoamines, and included under the common term of monoamine regulon. The chain is Monoamine regulon transcriptional regulator (moaR) from Klebsiella aerogenes (Enterobacter aerogenes).